A 186-amino-acid polypeptide reads, in one-letter code: Cytochrome c oxidase subunit 4, mitochondrial (186 aa).

Residues 1–31 (MLLSRTAVAVARRATAAPALRRSIATTVVRC) constitute a mitochondrion transit peptide. Residues Cys-118, His-126, Cys-142, and Cys-145 each contribute to the Zn(2+) site.

It belongs to the cytochrome c oxidase subunit 5B family. Component of the cytochrome c oxidase (complex IV, CIV), a multisubunit enzyme composed of 11 subunits. The complex is composed of a catalytic core of 3 subunits Cox1, Cox2 and Cox3, encoded in the mitochondrial DNA, and 8 supernumerary subunits Cox4, Cox5a/Cox5, Cox6, Cox7, Cox8, Cox7a/Cox9, Cox6b/Cox12 and Cox6a/Cox13, which are encoded in the nuclear genome. The complex exists as a monomer or a dimer and forms respiratory supercomplexes (SCs) in the inner mitochondrial membrane with NADH-ubiquinone oxidoreductase (complex I, CI) and ubiquinol-cytochrome c oxidoreductase (cytochrome b-c1 complex, complex III, CIII), resulting in various different assemblies (supercomplexes I(1)IV(1), I(1)III(3)IV(2), III(2)IV(1) and III(2)IV(2) as well as larger supercomplexes of compositions like I(1)III(2)IV(5-6)).

Its subcellular location is the mitochondrion inner membrane. The protein operates within energy metabolism; oxidative phosphorylation. In terms of biological role, component of the cytochrome c oxidase, the last enzyme in the mitochondrial electron transport chain which drives oxidative phosphorylation. The respiratory chain contains 3 multisubunit complexes succinate dehydrogenase (complex II, CII), ubiquinol-cytochrome c oxidoreductase (cytochrome b-c1 complex, complex III, CIII) and cytochrome c oxidase (complex IV, CIV), that cooperate to transfer electrons derived from NADH and succinate to molecular oxygen, creating an electrochemical gradient over the inner membrane that drives transmembrane transport and the ATP synthase. Cytochrome c oxidase is the component of the respiratory chain that catalyzes the reduction of oxygen to water. Electrons originating from reduced cytochrome c in the intermembrane space (IMS) are transferred via the dinuclear copper A center (CU(A)) of Cox2 and heme A of Cox1 to the active site in Cox1, a binuclear center (BNC) formed by heme A3 and copper B (CU(B)). The BNC reduces molecular oxygen to 2 water molecules using 4 electrons from cytochrome c in the IMS and 4 protons from the mitochondrial matrix. This Neurospora crassa (strain ATCC 24698 / 74-OR23-1A / CBS 708.71 / DSM 1257 / FGSC 987) protein is Cytochrome c oxidase subunit 4, mitochondrial (cox-4).